We begin with the raw amino-acid sequence, 842 residues long: Alanine--tRNA ligase (842 aa).

Zn(2+)-binding residues include His-549, His-553, Cys-650, and His-654.

This sequence belongs to the class-II aminoacyl-tRNA synthetase family. Requires Zn(2+) as cofactor.

It is found in the cytoplasm. The catalysed reaction is tRNA(Ala) + L-alanine + ATP = L-alanyl-tRNA(Ala) + AMP + diphosphate. Catalyzes the attachment of alanine to tRNA(Ala) in a two-step reaction: alanine is first activated by ATP to form Ala-AMP and then transferred to the acceptor end of tRNA(Ala). Also edits incorrectly charged Ser-tRNA(Ala) and Gly-tRNA(Ala) via its editing domain. The protein is Alanine--tRNA ligase of Campylobacter jejuni subsp. jejuni serotype O:23/36 (strain 81-176).